Here is a 404-residue protein sequence, read N- to C-terminus: S-adenosylmethionine synthase (404 aa).

H17 contacts ATP. Residue D19 participates in Mg(2+) binding. E45 contacts K(+). Positions 58 and 101 each coordinate L-methionine. The interval 101-111 (QSPDIAMGVDQ) is flexible loop. Residues 177–179 (DGK), 244–245 (RF), D253, 259–260 (RK), A276, and K280 each bind ATP. D253 contributes to the L-methionine binding site. K284 provides a ligand contact to L-methionine.

It belongs to the AdoMet synthase family. As to quaternary structure, homotetramer; dimer of dimers. Mg(2+) serves as cofactor. Requires K(+) as cofactor.

It localises to the cytoplasm. It catalyses the reaction L-methionine + ATP + H2O = S-adenosyl-L-methionine + phosphate + diphosphate. Its pathway is amino-acid biosynthesis; S-adenosyl-L-methionine biosynthesis; S-adenosyl-L-methionine from L-methionine: step 1/1. Its function is as follows. Catalyzes the formation of S-adenosylmethionine (AdoMet) from methionine and ATP. The overall synthetic reaction is composed of two sequential steps, AdoMet formation and the subsequent tripolyphosphate hydrolysis which occurs prior to release of AdoMet from the enzyme. The sequence is that of S-adenosylmethionine synthase from Geobacillus thermodenitrificans (strain NG80-2).